Reading from the N-terminus, the 309-residue chain is Tyrosine recombinase XerD (309 aa).

One can recognise a Core-binding (CB) domain in the interval 3–88 (MRASLAIENF…ALRQFFRFLY (86 aa)). Residues 109–302 (PLPKIMSVEN…LEERLHKLVS (194 aa)) enclose the Tyr recombinase domain. Active-site residues include Arg158, Lys182, His254, Arg257, and His280. Catalysis depends on Tyr289, which acts as the O-(3'-phospho-DNA)-tyrosine intermediate.

Belongs to the 'phage' integrase family. XerD subfamily. As to quaternary structure, forms a cyclic heterotetrameric complex composed of two molecules of XerC and two molecules of XerD.

The protein resides in the cytoplasm. Site-specific tyrosine recombinase, which acts by catalyzing the cutting and rejoining of the recombining DNA molecules. The XerC-XerD complex is essential to convert dimers of the bacterial chromosome into monomers to permit their segregation at cell division. It also contributes to the segregational stability of plasmids. This Brucella melitensis biotype 1 (strain ATCC 23456 / CCUG 17765 / NCTC 10094 / 16M) protein is Tyrosine recombinase XerD.